The chain runs to 332 residues: GTP 3',8-cyclase (332 aa).

A Radical SAM core domain is found at 7 to 221 (QYERLHDYVR…FDLCKQAGLD (215 aa)). Arginine 16 provides a ligand contact to GTP. The [4Fe-4S] cluster site is built by cysteine 23 and cysteine 27. Tyrosine 29 contacts S-adenosyl-L-methionine. Cysteine 30 is a [4Fe-4S] cluster binding site. Arginine 66 contacts GTP. Glycine 70 is a binding site for S-adenosyl-L-methionine. Residue threonine 97 coordinates GTP. Residue serine 121 coordinates S-adenosyl-L-methionine. Position 158 (lysine 158) interacts with GTP. Methionine 192 contributes to the S-adenosyl-L-methionine binding site. Cysteine 256 and cysteine 259 together coordinate [4Fe-4S] cluster. 261–263 (RLR) contacts GTP. Cysteine 273 serves as a coordination point for [4Fe-4S] cluster.

It belongs to the radical SAM superfamily. MoaA family. Monomer and homodimer. It depends on [4Fe-4S] cluster as a cofactor.

The enzyme catalyses GTP + AH2 + S-adenosyl-L-methionine = (8S)-3',8-cyclo-7,8-dihydroguanosine 5'-triphosphate + 5'-deoxyadenosine + L-methionine + A + H(+). The protein operates within cofactor biosynthesis; molybdopterin biosynthesis. Its function is as follows. Catalyzes the cyclization of GTP to (8S)-3',8-cyclo-7,8-dihydroguanosine 5'-triphosphate. The protein is GTP 3',8-cyclase of Limosilactobacillus fermentum (strain NBRC 3956 / LMG 18251) (Lactobacillus fermentum).